The primary structure comprises 160 residues: Anaerobic nitrite reductase MHB1 (160 aa).

Residues 8-157 form the Globin domain; the sequence is GFTEEQEALV…LVNAIKSEMK (150 aa). The short motif at 41 to 45 is the Homodimerization element; sequence EIAPS. Positions 51, 65, 69, 99, and 104 each coordinate heme b. The Homodimerization signature appears at 111–123; sequence DEHFEVTKFALLE.

It belongs to the plant globin family. As to quaternary structure, homodimer. Heme b serves as cofactor. Root specific.

It localises to the nucleus matrix. The protein resides in the cytoplasm. The catalysed reaction is Fe(III)-heme b-[protein] + nitric oxide + H2O = Fe(II)-heme b-[protein] + nitrite + 2 H(+). Its function is as follows. Phytoglobin that reduces nitrite to nitric oxide (NO) under anoxic conditions (e.g. during flooding or in waterlogged soil) and upon root nodulation. Required for general plant development and during nodulation, especially for the onset of symbiosis. Monitors nitric oxide (NO) levels during early phase of the nitrogen-fixing symbiosis and buffers oxygen in functioning nodules. May not function as an oxygen storage or transport protein. Has an unusually high affinity for O(2) through a hexacoordinate heme iron because of a very low dissociation constant. This Medicago sativa (Alfalfa) protein is Anaerobic nitrite reductase MHB1.